A 101-amino-acid polypeptide reads, in one-letter code: MRRFGKPCIVSHEISARPHILQPCNYKMVLSCKVKKPIELLHLQELILYTFMKICLHVNLIQQNINKLSYISRKYPRAPAFISCDNRATEPTKKGFLVCRM.

This is an uncharacterized protein from Saccharomyces cerevisiae (strain ATCC 204508 / S288c) (Baker's yeast).